The following is a 75-amino-acid chain: UPF0352 protein YPTB1297 (75 aa).

Belongs to the UPF0352 family.

This is UPF0352 protein YPTB1297 from Yersinia pseudotuberculosis serotype I (strain IP32953).